A 248-amino-acid chain; its full sequence is Transcriptional activator protein FnrL (248 aa).

The region spanning Lys154 to Ala232 is the HTH crp-type domain. Residues Arg191–Ser210 constitute a DNA-binding region (H-T-H motif).

Its function is as follows. Anaerobic regulatory protein; transcriptional activator of hemA. Appears to regulate other genes. The polypeptide is Transcriptional activator protein FnrL (fnrL) (Cereibacter sphaeroides (strain ATCC 17023 / DSM 158 / JCM 6121 / CCUG 31486 / LMG 2827 / NBRC 12203 / NCIMB 8253 / ATH 2.4.1.) (Rhodobacter sphaeroides)).